A 164-amino-acid polypeptide reads, in one-letter code: uncharacterized protein (164 aa).

This is an uncharacterized protein from Caenorhabditis elegans.